A 96-amino-acid chain; its full sequence is Cobalt transport protein CbiN (96 aa).

2 helical membrane-spanning segments follow: residues 4 to 24 (WLAAGGILLGALVVFSFVSAG) and 59 to 79 (IESLLFSIQAAVGGIIIGYYL).

The protein belongs to the CbiN family. As to quaternary structure, forms an energy-coupling factor (ECF) transporter complex composed of an ATP-binding protein (A component, CbiO), a transmembrane protein (T component, CbiQ) and 2 possible substrate-capture proteins (S components, CbiM and CbiN) of unknown stoichimetry.

The protein resides in the cell membrane. Its pathway is cofactor biosynthesis; adenosylcobalamin biosynthesis. In terms of biological role, part of the energy-coupling factor (ECF) transporter complex CbiMNOQ involved in cobalt import. The protein is Cobalt transport protein CbiN of Halobacterium salinarum (strain ATCC 29341 / DSM 671 / R1).